A 260-amino-acid polypeptide reads, in one-letter code: PsbP domain-containing protein 4, chloroplastic (260 aa).

This sequence belongs to the PsbP family.

The protein localises to the plastid. It localises to the chloroplast thylakoid lumen. The sequence is that of PsbP domain-containing protein 4, chloroplastic (PPD4) from Arabidopsis thaliana (Mouse-ear cress).